A 251-amino-acid polypeptide reads, in one-letter code: Probable transcriptional regulatory protein MLBr00475 (251 aa).

Belongs to the TACO1 family.

The protein localises to the cytoplasm. In Mycobacterium leprae (strain Br4923), this protein is Probable transcriptional regulatory protein MLBr00475.